The sequence spans 195 residues: Probable GTP-binding protein EngB (195 aa).

Residues 22–195 (GYPEIALVGR…WKWIEDRMGE (174 aa)) form the EngB-type G domain. GTP contacts are provided by residues 30–37 (GRSNVGKS), 57–61 (GKTQT), 75–78 (DVPG), 142–145 (TKSD), and 173–176 (MFSA). The Mg(2+) site is built by S37 and T59.

It belongs to the TRAFAC class TrmE-Era-EngA-EngB-Septin-like GTPase superfamily. EngB GTPase family. It depends on Mg(2+) as a cofactor.

Functionally, necessary for normal cell division and for the maintenance of normal septation. This chain is Probable GTP-binding protein EngB, found in Pediococcus pentosaceus (strain ATCC 25745 / CCUG 21536 / LMG 10740 / 183-1w).